Reading from the N-terminus, the 462-residue chain is O-methyltransferase CTB2 (462 aa).

Residue Asp289 participates in S-adenosyl-L-methionine binding. The active-site Proton acceptor is the His340.

Belongs to the class I-like SAM-binding methyltransferase superfamily. Cation-independent O-methyltransferase family. COMT subfamily.

It participates in mycotoxin biosynthesis. O-methyltransferase; part of the gene cluster that mediates the biosynthesis of cercosporin, a light-activated, non-host-selective toxin. The perylenequinone chromophore of cercosporin absorbs light energy to attain an electronically-activated triplet state and produces active oxygen species such as the hydroxyl radical, superoxide, hydrogen peroxide or singlet oxygen upon reaction with oxygen molecules. These reactive oxygen species cause damage to various cellular components including lipids, proteins and nucleic acids. The first step of cercosporin biosynthesis is performed by the polyketide synthase CTB1 which catalyzes the formation of nor-toralactone. The starter unit acyltransferase (SAT) domain of CTB1 initiates polyketide extension by the selective utilization of acetyl-CoA, which is elongated to the heptaketide in the beta-ketoacyl synthase (KS) domain by successive condensations with six malonyl units introduced by the malonyl acyltransferase (MAT) domain. The product template (PT) domain catalyzes C4-C9 and C2-C11 aldol cyclizations and dehydrations to a trihydroxynaphthalene, which is thought to be delivered to the thioesterase (TE) domain for product release. The bifunctional enzyme CTB3 then methylates nor-toralactone to toralactone before conducting an unusual oxidative aromatic ring opening. The O-methyltransferase CTB2 further methylates the nascent OH-6 of the CBT3 product, blocking further oxidation at this site before the reductase CTB6 reduces the 2-oxopropyl ketone at position C7, giving naphthalene. The FAD-dependent monooxygenase CTB5 in concert with the multicopper oxidase CTB12 are responsible for homodimerization of naphthalene with CTB7 installing the dioxepine moiety, finally producing cercosporin. The fasciclin domain-containing protein CTB11 might act with CTB5 and CTB12 whereas the roles of CTB9 and CTB10 have still to be elucidated. The protein is O-methyltransferase CTB2 of Cercospora beticola (Sugarbeet leaf spot fungus).